The following is a 78-amino-acid chain: UPF0349 protein BLi03401/BL03152 (78 aa).

The protein belongs to the UPF0349 family.

The protein is UPF0349 protein BLi03401/BL03152 of Bacillus licheniformis (strain ATCC 14580 / DSM 13 / JCM 2505 / CCUG 7422 / NBRC 12200 / NCIMB 9375 / NCTC 10341 / NRRL NRS-1264 / Gibson 46).